A 366-amino-acid chain; its full sequence is Spermidine/putrescine import ATP-binding protein PotA (366 aa).

The ABC transporter domain occupies 8–239 (IRFENVTKQF…PINKFVADFI (232 aa)). 41 to 48 (GPSGCGKT) contacts ATP.

It belongs to the ABC transporter superfamily. Spermidine/putrescine importer (TC 3.A.1.11.1) family. The complex is composed of two ATP-binding proteins (PotA), two transmembrane proteins (PotB and PotC) and a solute-binding protein (PotD).

The protein resides in the cell membrane. It catalyses the reaction ATP + H2O + polyamine-[polyamine-binding protein]Side 1 = ADP + phosphate + polyamineSide 2 + [polyamine-binding protein]Side 1.. Its function is as follows. Part of the ABC transporter complex PotABCD involved in spermidine/putrescine import. Responsible for energy coupling to the transport system. The chain is Spermidine/putrescine import ATP-binding protein PotA from Listeria monocytogenes serovar 1/2a (strain ATCC BAA-679 / EGD-e).